Here is a 348-residue protein sequence, read N- to C-terminus: Phospho-2-dehydro-3-deoxyheptonate aldolase, Trp-sensitive (348 aa).

The protein belongs to the class-I DAHP synthase family.

The enzyme catalyses D-erythrose 4-phosphate + phosphoenolpyruvate + H2O = 7-phospho-2-dehydro-3-deoxy-D-arabino-heptonate + phosphate. It participates in metabolic intermediate biosynthesis; chorismate biosynthesis; chorismate from D-erythrose 4-phosphate and phosphoenolpyruvate: step 1/7. Its function is as follows. Stereospecific condensation of phosphoenolpyruvate (PEP) and D-erythrose-4-phosphate (E4P) giving rise to 3-deoxy-D-arabino-heptulosonate-7-phosphate (DAHP). The chain is Phospho-2-dehydro-3-deoxyheptonate aldolase, Trp-sensitive (aroH) from Buchnera aphidicola subsp. Baizongia pistaciae (strain Bp).